The primary structure comprises 484 residues: tRNA sulfurtransferase (484 aa).

The THUMP domain maps to 63–167 (QAFGERLACI…RDNLYMVTKR (105 aa)). Residues 185–186 (LI), Lys-267, Gly-289, and Gln-298 each bind ATP. Cys-346 and Cys-458 are disulfide-bonded. The Rhodanese domain maps to 406-484 (IDTNQVVIDI…GYTNVKVYRP (79 aa)). Residue Cys-458 is the Cysteine persulfide intermediate of the active site.

This sequence belongs to the ThiI family.

Its subcellular location is the cytoplasm. The catalysed reaction is [ThiI sulfur-carrier protein]-S-sulfanyl-L-cysteine + a uridine in tRNA + 2 reduced [2Fe-2S]-[ferredoxin] + ATP + H(+) = [ThiI sulfur-carrier protein]-L-cysteine + a 4-thiouridine in tRNA + 2 oxidized [2Fe-2S]-[ferredoxin] + AMP + diphosphate. The enzyme catalyses [ThiS sulfur-carrier protein]-C-terminal Gly-Gly-AMP + S-sulfanyl-L-cysteinyl-[cysteine desulfurase] + AH2 = [ThiS sulfur-carrier protein]-C-terminal-Gly-aminoethanethioate + L-cysteinyl-[cysteine desulfurase] + A + AMP + 2 H(+). Its pathway is cofactor biosynthesis; thiamine diphosphate biosynthesis. In terms of biological role, catalyzes the ATP-dependent transfer of a sulfur to tRNA to produce 4-thiouridine in position 8 of tRNAs, which functions as a near-UV photosensor. Also catalyzes the transfer of sulfur to the sulfur carrier protein ThiS, forming ThiS-thiocarboxylate. This is a step in the synthesis of thiazole, in the thiamine biosynthesis pathway. The sulfur is donated as persulfide by IscS. This chain is tRNA sulfurtransferase, found in Shewanella baltica (strain OS155 / ATCC BAA-1091).